The following is a 312-amino-acid chain: Glyoxylate/hydroxypyruvate reductase A (312 aa).

Arg227 is a catalytic residue. The active-site Proton donor is the His275.

This sequence belongs to the D-isomer specific 2-hydroxyacid dehydrogenase family. GhrA subfamily.

It localises to the cytoplasm. The catalysed reaction is glycolate + NADP(+) = glyoxylate + NADPH + H(+). It catalyses the reaction (R)-glycerate + NAD(+) = 3-hydroxypyruvate + NADH + H(+). The enzyme catalyses (R)-glycerate + NADP(+) = 3-hydroxypyruvate + NADPH + H(+). In terms of biological role, catalyzes the NADPH-dependent reduction of glyoxylate and hydroxypyruvate into glycolate and glycerate, respectively. In Escherichia coli O7:K1 (strain IAI39 / ExPEC), this protein is Glyoxylate/hydroxypyruvate reductase A.